The chain runs to 135 residues: MRRAYRLRRPEQFRRVRQEGRTFTSPWLILTVAPARRRTLRCGFVVSRRVGGAVQRNRARRRVREAVRLLLPRLTAGYDMVFTIRTPEVIDAPFTQLQDDITALLRQACLLPAPTNETVSPVSDTPLPQHERGSQ.

The disordered stretch occupies residues 115-135 (TNETVSPVSDTPLPQHERGSQ).

This sequence belongs to the RnpA family. Consists of a catalytic RNA component (M1 or rnpB) and a protein subunit.

It carries out the reaction Endonucleolytic cleavage of RNA, removing 5'-extranucleotides from tRNA precursor.. Its function is as follows. RNaseP catalyzes the removal of the 5'-leader sequence from pre-tRNA to produce the mature 5'-terminus. It can also cleave other RNA substrates such as 4.5S RNA. The protein component plays an auxiliary but essential role in vivo by binding to the 5'-leader sequence and broadening the substrate specificity of the ribozyme. The protein is Ribonuclease P protein component of Chloroflexus aurantiacus (strain ATCC 29366 / DSM 635 / J-10-fl).